Consider the following 2280-residue polypeptide: Protein Ycf2 (2280 aa).

1631–1638 (GSIGTGRS) is a binding site for ATP.

The protein belongs to the Ycf2 family.

It is found in the plastid. The protein localises to the chloroplast stroma. Probable ATPase of unknown function. Its presence in a non-photosynthetic plant (Epifagus virginiana) and experiments in tobacco indicate that it has an essential function which is probably not related to photosynthesis. This Nicotiana tomentosiformis (Tobacco) protein is Protein Ycf2.